The chain runs to 609 residues: Laccase-1 (609 aa).

The first 20 residues, 1-20 (MYLSTVLFPLLALNLGLSHA), serve as a signal peptide directing secretion. Residues 45–141 (VFTNGEYPGP…DGQVGAMYIR (97 aa)) enclose the Plastocyanin-like 1 domain. N-linked (GlcNAc...) asparagine glycosylation is present at Asn-75. Residues His-79, His-81, His-123, and His-125 each coordinate Cu cation. A glycan (N-linked (GlcNAc...) asparagine) is linked at Asn-257. The Plastocyanin-like 2 domain occupies 270 to 372 (TPSSVEPPVI…MSVYAILSYV (103 aa)). 3 N-linked (GlcNAc...) asparagine glycosylation sites follow: Asn-403, Asn-443, and Asn-486. Positions 463 to 602 (STPLLFEPDP…MGGMALALLD (140 aa)) constitute a Plastocyanin-like 3 domain. Cu cation contacts are provided by His-508, His-511, and His-513. N-linked (GlcNAc...) asparagine glycans are attached at residues Asn-531 and Asn-546. Cu cation is bound by residues His-585, Cys-586, His-587, and His-591.

The protein belongs to the multicopper oxidase family. Requires Cu cation as cofactor.

The protein resides in the secreted. It catalyses the reaction 4 hydroquinone + O2 = 4 benzosemiquinone + 2 H2O. Functionally, required for the conversion of the yellow polyketide pigment synthesized by wA to the conidial green pigment. This chain is Laccase-1 (yA), found in Emericella nidulans (strain FGSC A4 / ATCC 38163 / CBS 112.46 / NRRL 194 / M139) (Aspergillus nidulans).